Reading from the N-terminus, the 956-residue chain is MIIHFTLNGAPQELTVNPGENVQKLLFNMGMHSVRNSDDGFGFAGSDAIIFNGNIVNASLLIAAQLEKADIRTAESLGKWNELSLVQQAMVDVGVVQSGYNDPAAALIITDLLDRIAAPTREEIDDALSGLFSRDAGWQQYYQVIELAVARKNNPQATIDIAPTFRDDLEVIGKHYPKTDAAKMVQAKPCYVEDRVTADACVIKMLRSPHAHALITHLDVSKAEALPGVVHVITHLNCPDIYYTPGGQSAPEPSPLDRRMFGKKMRHVGDRVAAVVAESEEIALEALKLIDVEYEVLKPVMSIDEAMAEDAPVVHDEPVVYVAGAPDTLEDDNSHAAQRGEHMIINFPIGSRPRKNIAASIHGHIGDMDKGFADADVIIERTYNSTQAQQCPTETHICFTRMDGDRLVIHASTQVPWHLRRQVARLVGMKQHKVHVIKERVGGGFGSKQDILLEEVCAWATCVTGRPVLFRYTREEEFIANTSRHVAKVTVKLGAKKDGRLTAVKMDFRANTGPYGNHSLTVPCNGPALSLPLYPCDNVDFQVTTYYSNICPNGAYQGYGAPKGNFAITMALAELAEQLQIDQLEIIERNRVHEGQELKILGAIGEGKAPTSVPSAASCALEEILRQGREMIQWSSPKPQNGDWHIGRGVAIIMQKSGIPDIDQANCMIKLESDGTFIVHSGGADIGTGLDTVVTKLAAEVLHCPPQDVHVISGDTDHALFDKGAYASSGTCFSGNAARLAAENLREKILFHGAQMLGEPVADVQLATPGVVRGKKGEVSFGDIAHKGETGTGFGSLVGTGSYITPDFAFPYGANFAEVAVNTRTGEIRLDKFYALLDCGTPVNPELALGQIYGATLRAIGHSMSEEIIYDAEGHPLTRDLRSYGAPKIGDIPRDFRAVLVPSDDKVGPFGAKSISEIGVNGAAPAIATAIHDACGIWLREWHFTPEKILTALEKI.

The Mo-molybdopterin site is built by Gln-414, Phe-445, and Ala-727.

This sequence belongs to the xanthine dehydrogenase family. [2Fe-2S] cluster serves as cofactor. The cofactor is Mo-molybdopterin.

Functionally, probably has no xanthine dehydrogenase activity; however deletion results in increased adenine sensitivity, suggesting that this protein contributes to the conversion of adenine to guanine nucleotides during purine salvage. This Escherichia coli (strain K12) protein is Probable hypoxanthine oxidase XdhD (xdhD).